The following is an 816-amino-acid chain: Pentatricopeptide repeat-containing protein At5g12100, mitochondrial (816 aa).

The transit peptide at 1–39 (MVTRLRLVSRSSRYATVKFTDSVSACSCRRLFSASTDPE) directs the protein to the mitochondrion. Residues 34–57 (ASTDPEPESQPEQAPPTNPVTGDE) are disordered. PPR repeat units lie at residues 108–142 (HDFSYLLLSVLLNESKMISEAADLFFALRNEGIYP), 143–177 (SSDSLTLLLDHLVKTKQFRVTINVFLNILESDFRP), 178–212 (SKFMYGKAIQAAVKLSDVGKGLELFNRMKHDRIYP), 213–247 (SVFIYNVLIDGLCKGKRMNDAEQLFDEMLARRLLP), 248–282 (SLITYNTLIDGYCKAGNPEKSFKVRERMKADHIEP), 283–317 (SLITFNTLLKGLFKAGMVEDAENVLKEMKDLGFVP), 318–352 (DAFTFSILFDGYSSNEKAEAALGVYETAVDSGVKM), 353–387 (NAYTCSILLNALCKEGKIEKAEEILGREMAKGLVP), 388–422 (NEVIYNTMIDGYCRKGDLVGARMKIEAMEKQGMKP), 423–457 (DHLAYNCLIRRFCELGEMENAEKEVNKMKLKGVSP), 458–492 (SVETYNILIGGYGRKYEFDKCFDILKEMEDNGTMP), 493–527 (NVVSYGTLINCLCKGSKLLEAQIVKRDMEDRGVSP), 528–562 (KVRIYNMLIDGCCSKGKIEDAFRFSKEMLKKGIEL), 563–597 (NLVTYNTLIDGLSMTGKLSEAEDLLLEISRKGLKP), 598–632 (DVFTYNSLISGYGFAGNVQRCIALYEEMKRSGIKP), 633–662 (TLKTYHLLISLCTKEGIELTERLFGEMSLK), 664–698 (DLLVYNGVLHCYAVHGDMEKAFNLQKQMIEKSIGL), 699–733 (DKTTYNSLILGQLKVGKLCEVRSLIDEMNAREMEP), 734–768 (EADTYNIIVKGHCEVKDYMSAYVWYREMQEKGFLL), and 769–803 (DVCIGNELVSGLKEEWRSKEAEIVISEMNGRMLGD).

It belongs to the PPR family. P subfamily.

The protein localises to the mitochondrion. In Arabidopsis thaliana (Mouse-ear cress), this protein is Pentatricopeptide repeat-containing protein At5g12100, mitochondrial.